Reading from the N-terminus, the 514-residue chain is 2,3-bisphosphoglycerate-independent phosphoglycerate mutase (514 aa).

The Mn(2+) site is built by Asp-15 and Ser-65. Ser-65 functions as the Phosphoserine intermediate in the catalytic mechanism. Substrate-binding positions include His-126, 156–157 (RD), Arg-188, Arg-194, 261–264 (RADR), and Lys-335. Residues Asp-403, His-407, Asp-444, His-445, and His-462 each coordinate Mn(2+).

It belongs to the BPG-independent phosphoglycerate mutase family. Monomer. Mn(2+) serves as cofactor.

It catalyses the reaction (2R)-2-phosphoglycerate = (2R)-3-phosphoglycerate. It functions in the pathway carbohydrate degradation; glycolysis; pyruvate from D-glyceraldehyde 3-phosphate: step 3/5. Its function is as follows. Catalyzes the interconversion of 2-phosphoglycerate and 3-phosphoglycerate. The protein is 2,3-bisphosphoglycerate-independent phosphoglycerate mutase of Syntrophotalea carbinolica (strain DSM 2380 / NBRC 103641 / GraBd1) (Pelobacter carbinolicus).